Consider the following 372-residue polypeptide: Ligninase A (372 aa).

Positions 1–21 (MAFKQLVAAISLALSLTTANA) are cleaved as a signal peptide. Positions 22 to 28 (AVVKEKR) are excised as a propeptide. 4 disulfide bridges follow: C31–C43, C42–C313, C62–C148, and C277–C345. H75 serves as the catalytic Proton acceptor. 4 residues coordinate Ca(2+): D76, G94, D96, and S98. H204 contacts heme b. Ca(2+) is bound by residues S205, D222, T224, I227, and D229. N-linked (GlcNAc...) asparagine glycosylation occurs at N285.

It belongs to the peroxidase family. Ligninase subfamily. It depends on heme b as a cofactor. The cofactor is Ca(2+).

It carries out the reaction 1-(3,4-dimethoxyphenyl)-2-(2-methoxyphenoxy)propane-1,3-diol + H2O2 = 3,4-dimethoxybenzaldehyde + guaiacol + glycolaldehyde + H2O. The enzyme catalyses 2 (3,4-dimethoxyphenyl)methanol + H2O2 = 2 (3,4-dimethoxyphenyl)methanol radical + 2 H2O. Its pathway is secondary metabolite metabolism; lignin degradation. In terms of biological role, depolymerization of lignin. Catalyzes the C(alpha)-C(beta) cleavage of the propyl side chains of lignin. The protein is Ligninase A (LIPA) of Phanerodontia chrysosporium (White-rot fungus).